The primary structure comprises 366 residues: Phospho-N-acetylmuramoyl-pentapeptide-transferase (366 aa).

10 consecutive transmembrane segments (helical) span residues 27-47 (AALFTSALIVFLFGPTIINSL), 71-91 (TPTMGGLMILAGIVGASLLWA), 93-113 (LSNVYVVATLLVTLGFGAIGF), 134-154 (LGIEFVIAGIAVYFMMRTALA), 174-194 (FMINIGIMFVVFGGFVIVGAG), 205-225 (GLAIVPVMIAAASFGVIAYLA), 245-265 (LAVVLGAVIGAGLGFLWFNAP), 268-288 (AIFMGDTGSLALGGTIGTVAV), 294-314 (IVMAIIGGLFVMETLSVIIQV), and 343-363 (QVVIRFWIIAVGLAMLGLSTL).

This sequence belongs to the glycosyltransferase 4 family. MraY subfamily. Requires Mg(2+) as cofactor.

It is found in the cell inner membrane. It carries out the reaction UDP-N-acetyl-alpha-D-muramoyl-L-alanyl-gamma-D-glutamyl-meso-2,6-diaminopimeloyl-D-alanyl-D-alanine + di-trans,octa-cis-undecaprenyl phosphate = di-trans,octa-cis-undecaprenyl diphospho-N-acetyl-alpha-D-muramoyl-L-alanyl-D-glutamyl-meso-2,6-diaminopimeloyl-D-alanyl-D-alanine + UMP. The protein operates within cell wall biogenesis; peptidoglycan biosynthesis. Functionally, catalyzes the initial step of the lipid cycle reactions in the biosynthesis of the cell wall peptidoglycan: transfers peptidoglycan precursor phospho-MurNAc-pentapeptide from UDP-MurNAc-pentapeptide onto the lipid carrier undecaprenyl phosphate, yielding undecaprenyl-pyrophosphoryl-MurNAc-pentapeptide, known as lipid I. This is Phospho-N-acetylmuramoyl-pentapeptide-transferase from Rhizobium leguminosarum bv. trifolii (strain WSM2304).